The primary structure comprises 129 residues: SOSS complex subunit C homolog (129 aa).

Residues 105–129 (RLEPLPSPATTPTTPNAPPSHSISK) are disordered.

This sequence belongs to the SOSS-C family.

The chain is SOSS complex subunit C homolog from Drosophila simulans (Fruit fly).